The primary structure comprises 99 residues: Sarcosine oxidase subunit delta (99 aa).

Cys-6, Cys-9, His-59, and Cys-63 together coordinate Zn(2+).

Belongs to the SoxD family. In terms of assembly, heterotetramer composed of subunits alpha (SoxA), beta (SoxB), gamma (SoxG) and delta (SoxD).

It is found in the cytoplasm. It catalyses the reaction sarcosine + (6S)-5,6,7,8-tetrahydrofolate + O2 = (6R)-5,10-methylene-5,6,7,8-tetrahydrofolate + glycine + H2O2. The enzyme catalyses sarcosine + O2 + H2O = formaldehyde + glycine + H2O2. Its activity is regulated as follows. Inhibited by Zn(2+), Cu(2+), Cd(2+), Hg(2+), Ag(+), p-chloromercuribenzoate (p-CMB), iodoacetamide, N-ethylmaleimide, CN(-), o-phenanthroline and sodium lauryl sulfate. In terms of biological role, in the presence of tetrahydrofolate, catalyzes the oxidative demethylation of sarcosine to yield glycine, 5,10-methylenetetrahydrofolate and hydrogen peroxide. In the absence of tetrahydrofolate, catalyzes the oxidative demethylation of sarcosine to yield glycine, formaldehyde and hydrogen peroxide. Can also use N-methyl-L-alanine and N-ethyl-L-glycine. Is very specific for oxygen as an acceptor. The chain is Sarcosine oxidase subunit delta from Corynebacterium sp. (strain U-96).